The sequence spans 876 residues: MSDLAREITPVNIEEELKSSYLDYAMSVIVGRALPDVRDGLKPVHRRVLYAMNVLGNDWNKAYKKSARVVGDVIGKYHPHGDTAVYDTIVRMAQPFSLRYMLVDGQGNFGSVDGDSAAAMRYTEIRMSKIAHELMADLEKETVDFVDNYDGTEKIPDVMPTKIPNLLVNGSFGIAVGMATNIPPHNLTEVINGRLAYVEDEEISIEGLMEHIPGPDFPTAAIINGRRGIEEAYRTGRGKVYICARAEVEADAKTGRETIIVHEIPYQVNKARLIEKIAELVKEKRVEGISALRDESDKDGMRIVIEVKRDAVGRVVLNNLYSQTQLQVSFGINMVALHHGQPKIMNLKEIIAAFVRHRREVVTRRTILALRKARDRADILEALSIALANIDPIIELIRRAPTPAEAKAGLIARSWDLGNVSAMLEAGDDAARPEWLEPEFGVRDGQYYLTEQQAQAILDLRLQKLTGLEHEKLLDEYKELLEQIAELLHILGSADRLMEVIREELELVREQFGDARRTDITANSVDINIEDLITQEDVVVTLSHEGYVKYQPVNDYEAQRRGGKGKSAPRIKEEDFIDRLLVANTHDTILCFSSRGRLYWMKVYQVPEASRGARGRPIVNLLPLEANERYTAILPVREYEEGVNVFMATASGTVKKTPADEFSRPRSAGIIAVNLNEGDELIGVDLTSGQDEVMLFSAAGKVVRFKEDDVRAMGRTATGVRGIKLAGEDKVVSLIVPRGEGRILTATENGYRKRTAVAEYPTKSRATQGVISIKVTERNGSVVGAVQVDDCDQIMMITDAGTLVRIRVSEVSIVGRNTQGVILIRTAEDENVVALQRVAEPVDDEELDAIDGSAAEGDEDIAPEADTDDDIAEDEE.

Residues 34-532 (LPDVRDGLKP…NSVDINIEDL (499 aa)) enclose the Topo IIA-type catalytic domain. Catalysis depends on Tyr-122, which acts as the O-(5'-phospho-DNA)-tyrosine intermediate. The short motif at 559–565 (QRRGGKG) is the GyrA-box element. The disordered stretch occupies residues 844 to 876 (DEELDAIDGSAAEGDEDIAPEADTDDDIAEDEE). A compositionally biased stretch (acidic residues) spans 856–876 (EGDEDIAPEADTDDDIAEDEE).

The protein belongs to the type II topoisomerase GyrA/ParC subunit family. Heterotetramer, composed of two GyrA and two GyrB chains. In the heterotetramer, GyrA contains the active site tyrosine that forms a transient covalent intermediate with DNA, while GyrB binds cofactors and catalyzes ATP hydrolysis.

It localises to the cytoplasm. It catalyses the reaction ATP-dependent breakage, passage and rejoining of double-stranded DNA.. In terms of biological role, a type II topoisomerase that negatively supercoils closed circular double-stranded (ds) DNA in an ATP-dependent manner to modulate DNA topology and maintain chromosomes in an underwound state. Negative supercoiling favors strand separation, and DNA replication, transcription, recombination and repair, all of which involve strand separation. Also able to catalyze the interconversion of other topological isomers of dsDNA rings, including catenanes and knotted rings. Type II topoisomerases break and join 2 DNA strands simultaneously in an ATP-dependent manner. The polypeptide is DNA gyrase subunit A (Klebsiella oxytoca).